A 186-amino-acid chain; its full sequence is Large ribosomal subunit protein bL9 (186 aa).

Positions 151-167 (PEEAEKQARGEAIMREE) are enriched in basic and acidic residues. Residues 151–186 (PEEAEKQARGEAIMREESEYELETGEEVAEGPEQTA) are disordered. Acidic residues predominate over residues 168 to 180 (SEYELETGEEVAE).

This sequence belongs to the bacterial ribosomal protein bL9 family.

Its function is as follows. Binds to the 23S rRNA. This chain is Large ribosomal subunit protein bL9, found in Acidiphilium cryptum (strain JF-5).